The sequence spans 278 residues: Ubiquinone biosynthesis protein COQ4, mitochondrial (278 aa).

The transit peptide at 1-28 directs the protein to the mitochondrion; the sequence is MATPTSVRIAGFRSLQALCAQRTVTRNF. Residues H164, D165, H168, and E180 each contribute to the Zn(2+) site.

This sequence belongs to the COQ4 family. Component of a multi-subunit COQ enzyme complex, composed of at least COQ3, COQ4, COQ5, COQ6, COQ7 and COQ9. The cofactor is Zn(2+).

The protein resides in the mitochondrion inner membrane. It carries out the reaction a 4-hydroxy-3-methoxy-5-(all-trans-polyprenyl)benzoate + H(+) = a 2-methoxy-6-(all-trans-polyprenyl)phenol + CO2. The protein operates within cofactor biosynthesis; ubiquinone biosynthesis. In terms of biological role, lyase that catalyzes the C1-decarboxylation of 4-hydroxy-3-methoxy-5-(all-trans-polyprenyl)benzoic acid into 2-methoxy-6-(all-trans-polyprenyl)phenol during ubiquinone biosynthesis. This Uncinocarpus reesii (strain UAMH 1704) protein is Ubiquinone biosynthesis protein COQ4, mitochondrial.